The primary structure comprises 137 residues: Ribosome-binding factor A (137 aa).

The protein belongs to the RbfA family. In terms of assembly, monomer. Binds 30S ribosomal subunits, but not 50S ribosomal subunits or 70S ribosomes.

The protein localises to the cytoplasm. Functionally, one of several proteins that assist in the late maturation steps of the functional core of the 30S ribosomal subunit. Associates with free 30S ribosomal subunits (but not with 30S subunits that are part of 70S ribosomes or polysomes). Required for efficient processing of 16S rRNA. May interact with the 5'-terminal helix region of 16S rRNA. The sequence is that of Ribosome-binding factor A from Nitrobacter hamburgensis (strain DSM 10229 / NCIMB 13809 / X14).